The primary structure comprises 228 residues: Ribonuclease HII (228 aa).

The 192-residue stretch at 11-202 folds into the RNase H type-2 domain; it reads GPVAGVDEAG…VVAAAQLHGM (192 aa). Residues Asp17, Glu18, and Asp111 each contribute to the a divalent metal cation site.

The protein belongs to the RNase HII family. It depends on Mn(2+) as a cofactor. Requires Mg(2+) as cofactor.

It localises to the cytoplasm. The catalysed reaction is Endonucleolytic cleavage to 5'-phosphomonoester.. Functionally, endonuclease that specifically degrades the RNA of RNA-DNA hybrids. The polypeptide is Ribonuclease HII (Saccharopolyspora erythraea (strain ATCC 11635 / DSM 40517 / JCM 4748 / NBRC 13426 / NCIMB 8594 / NRRL 2338)).